The primary structure comprises 141 residues: Hemoglobin subunit alpha (141 aa).

The 141-residue stretch at 1–141 (VLSSADKNNV…VSTVLTSKYR (141 aa)) folds into the Globin domain. S3 is modified (phosphoserine). N6-succinyllysine occurs at positions 7 and 11. K16 is modified (N6-acetyllysine; alternate). N6-succinyllysine; alternate is present on K16. Residue Y24 is modified to Phosphotyrosine. Position 35 is a phosphoserine (S35). At K40 the chain carries N6-succinyllysine. S49 carries the phosphoserine modification. H58 lines the O2 pocket. Residue H87 participates in heme b binding. The residue at position 102 (S102) is a Phosphoserine. Position 108 is a phosphothreonine (T108). S124 bears the Phosphoserine mark. Residues T134 and T137 each carry the phosphothreonine modification. S138 carries the phosphoserine modification.

It belongs to the globin family. Heterotetramer of two alpha chains and two beta chains. In terms of tissue distribution, red blood cells.

In terms of biological role, involved in oxygen transport from the lung to the various peripheral tissues. Its function is as follows. Hemopressin acts as an antagonist peptide of the cannabinoid receptor CNR1. Hemopressin-binding efficiently blocks cannabinoid receptor CNR1 and subsequent signaling. The polypeptide is Hemoglobin subunit alpha (HBA) (Panthera tigris sumatrae (Sumatran tiger)).